Here is a 312-residue protein sequence, read N- to C-terminus: Bifunctional pinoresinol-lariciresinol reductase (312 aa).

Residues 10-16 (GGTGYLG), Arg-35, and Lys-44 contribute to the NADP(+) site. Lys-139 (proton acceptor) is an active-site residue. Residue Arg-143 coordinates NADP(+). His-271 contributes to the substrate binding site.

This sequence belongs to the NmrA-type oxidoreductase family. Isoflavone reductase subfamily. Dimer. In terms of tissue distribution, expressed in young stems, young roots and petioles. In stems, expressed in radial parenchyma cells and in the cambial cells of developing secondary xylem.

The enzyme catalyses (+)-lariciresinol + NADP(+) = (+)-pinoresinol + NADPH + H(+). It carries out the reaction (-)-secoisolariciresinol + NADP(+) = (+)-lariciresinol + NADPH + H(+). In terms of biological role, reductase involved in lignan biosynthesis. Catalyzes the enantioselective sequential conversion of (+)-pinoresinol into (+)-lariciresinol and of (+)-lariciresinol into (-)-secoisolariciresinol. Abstracts the 4R-hydride from the NADPH cofactor during catalysis. This Forsythia intermedia (Border forsythia) protein is Bifunctional pinoresinol-lariciresinol reductase (PLR_Fi1).